A 417-amino-acid polypeptide reads, in one-letter code: Actin-like protein 7B (417 aa).

The disordered stretch occupies residues 1–39; that stretch reads MATKNNPSPKPMGTAQGDPGEAGTLPAPEAGIRDTGSTQ. At Ser8 the chain carries Phosphoserine.

The protein belongs to the actin family.

It localises to the cytoplasm. The protein resides in the cytoskeleton. The sequence is that of Actin-like protein 7B (Actl7b) from Rattus norvegicus (Rat).